The sequence spans 151 residues: UPF0178 protein Ping_0754 (151 aa).

It belongs to the UPF0178 family.

In Psychromonas ingrahamii (strain DSM 17664 / CCUG 51855 / 37), this protein is UPF0178 protein Ping_0754.